A 278-amino-acid polypeptide reads, in one-letter code: Large ribosomal subunit protein uL2 (278 aa).

The interval 201–278 (HGNINDGKAG…IMRSRHQRKK (78 aa)) is disordered. Positions 210–221 (GRSRWRGKKPHV) are enriched in basic residues.

Belongs to the universal ribosomal protein uL2 family. In terms of assembly, part of the 50S ribosomal subunit. Forms a bridge to the 30S subunit in the 70S ribosome.

In terms of biological role, one of the primary rRNA binding proteins. Required for association of the 30S and 50S subunits to form the 70S ribosome, for tRNA binding and peptide bond formation. It has been suggested to have peptidyltransferase activity; this is somewhat controversial. Makes several contacts with the 16S rRNA in the 70S ribosome. In Rhizobium rhizogenes (strain K84 / ATCC BAA-868) (Agrobacterium radiobacter), this protein is Large ribosomal subunit protein uL2.